The sequence spans 125 residues: Large ribosomal subunit protein bL12 (125 aa).

The protein belongs to the bacterial ribosomal protein bL12 family. Homodimer. Part of the ribosomal stalk of the 50S ribosomal subunit. Forms a multimeric L10(L12)X complex, where L10 forms an elongated spine to which 2 to 4 L12 dimers bind in a sequential fashion. Binds GTP-bound translation factors.

Its function is as follows. Forms part of the ribosomal stalk which helps the ribosome interact with GTP-bound translation factors. Is thus essential for accurate translation. The sequence is that of Large ribosomal subunit protein bL12 from Rhizobium leguminosarum bv. trifolii (strain WSM2304).